Consider the following 414-residue polypeptide: E3 ubiquitin-protein ligase makorin-2 (414 aa).

2 C3H1-type zinc fingers span residues 2-29 and 31-58; these read STKQ…HDLT and SKPS…HIKP. A disordered region spans residues 57-94; sequence KPPGRGSGAPADHSNRSSSSAGASAPGPGPPANTSKHL. The segment covering 73 to 82 has biased composition (low complexity); it reads SSSSAGASAP. Residues 164 to 191 form a C3H1-type 3 zinc finger; it reads QTSPQICPFLAAGQCQYGESCPYLHGEM. Residues 192–221 are makorin-type Cys-His; the sequence is CEICRQHVLHPHDPEQRAAHEKKCMVAFEM. The RING-type zinc finger occupies 237 to 291; it reads CKICLDVVYEKSSPSERRFGILSSCAHTYCLNCIRQWRCVEQLHNQIRKSCPECR. Residues 320–349 form a C3H1-type 4 zinc finger; that stretch reads GVSKKACKYFDQGRGTCPFGGKCFYMHAYA.

The protein localises to the cytoplasm. It is found in the nucleus. It carries out the reaction S-ubiquitinyl-[E2 ubiquitin-conjugating enzyme]-L-cysteine + [acceptor protein]-L-lysine = [E2 ubiquitin-conjugating enzyme]-L-cysteine + N(6)-ubiquitinyl-[acceptor protein]-L-lysine.. The protein operates within protein modification; protein ubiquitination. Functionally, E3 ubiquitin ligase catalyzing the covalent attachment of ubiquitin moieties onto substrate proteins. Inhibits neurogenesis and axis formation during embryonic development by modulating the phosphatidylinositol 3-kinase (PI3K) pathway. Acts downstream of PI3K and akt1 to up-regulate gsk3b mRNA expression. In Danio rerio (Zebrafish), this protein is E3 ubiquitin-protein ligase makorin-2 (mkrn2).